Consider the following 95-residue polypeptide: MHKQPKLLPPPATPPPPPQSSSWSGNIVFTIKINIWLRVFSHSSPTGLPKPHSPMPSPPEPEHSVGKPANVQIPQVSSPEFCNQKSVLATEHAQT.

Disordered stretches follow at residues 1-24 (MHKQ…SSWS) and 43-70 (SSPT…KPAN). Residues 7–19 (LLPPPATPPPPPQ) show a composition bias toward pro residues.

As to expression, expressed in fetal tissues.

The chain is SMAD5 antisense gene protein 1 (SMAD5-AS1) from Homo sapiens (Human).